Here is a 239-residue protein sequence, read N- to C-terminus: DNA repair protein RecO (239 aa).

The protein belongs to the RecO family.

Functionally, involved in DNA repair and RecF pathway recombination. The chain is DNA repair protein RecO from Stenotrophomonas maltophilia (strain R551-3).